The sequence spans 459 residues: Phosphomethylpyrimidine synthase (459 aa).

Substrate-binding positions include Asn-80, Met-109, Tyr-139, His-175, 195 to 197 (SRG), 236 to 239 (DSLR), and Glu-275. His-279 contributes to the Zn(2+) binding site. Tyr-302 is a substrate binding site. His-343 provides a ligand contact to Zn(2+). [4Fe-4S] cluster contacts are provided by Cys-423, Cys-426, and Cys-431.

Belongs to the ThiC family. [4Fe-4S] cluster serves as cofactor.

It catalyses the reaction 5-amino-1-(5-phospho-beta-D-ribosyl)imidazole + S-adenosyl-L-methionine = 4-amino-2-methyl-5-(phosphooxymethyl)pyrimidine + CO + 5'-deoxyadenosine + formate + L-methionine + 3 H(+). It participates in cofactor biosynthesis; thiamine diphosphate biosynthesis. Its function is as follows. Catalyzes the synthesis of the hydroxymethylpyrimidine phosphate (HMP-P) moiety of thiamine from aminoimidazole ribotide (AIR) in a radical S-adenosyl-L-methionine (SAM)-dependent reaction. The sequence is that of Phosphomethylpyrimidine synthase from Prochlorococcus marinus (strain MIT 9303).